Here is a 170-residue protein sequence, read N- to C-terminus: Putative beta-eliminating lyase-like protein (170 aa).

An N6-(pyridoxal phosphate)lysine modification is found at K32.

The protein belongs to the beta-eliminating lyase family. Pyridoxal 5'-phosphate is required as a cofactor.

The sequence is that of Putative beta-eliminating lyase-like protein from Dictyostelium discoideum (Social amoeba).